The chain runs to 323 residues: MAKIGMDLNSFILEQERLYPNATGSLSRALVAIESATKVIASHVRMAGLADILGMAGKKNIQGEEVQKLDELSNNLLIQYLSQSGEFFALASEELDEPIFPEEGKDAKYVIAFDPLDGSSNIDVNISIGTIFSIHRRVNSDVSDFLQEGYKQVAAGYVIYGSSTMLVLSTGNGVNGFTLDPAVGMYLLSHPNMKIPEKGKIYSINESNDKKWIDAGLKEYIESLKDEGYTSRYIGSMVADVHRTLIKGGIFAYPADVKNKNGKLRLLYEASPMAFLTVQAGGIATTGKEDILNIKPTDIHQRVPVFLGGKYEMEKLKSMLKNG.

Residues Glu93, Asp114, Leu116, and Asp117 each contribute to the Mg(2+) site. Substrate-binding positions include 117-120 (DGSS), Asn205, Tyr233, and Lys263. Residue Glu269 coordinates Mg(2+).

Belongs to the FBPase class 1 family. Homotetramer. Mg(2+) is required as a cofactor.

The protein resides in the cytoplasm. The catalysed reaction is beta-D-fructose 1,6-bisphosphate + H2O = beta-D-fructose 6-phosphate + phosphate. It functions in the pathway carbohydrate biosynthesis; gluconeogenesis. In Sulfurihydrogenibium sp. (strain YO3AOP1), this protein is Fructose-1,6-bisphosphatase class 1.